The following is a 257-amino-acid chain: NH(3)-dependent NAD(+) synthetase (257 aa).

28–35 (GISGGVDS) is a binding site for ATP. Aspartate 34 serves as a coordination point for Mg(2+). Arginine 109 provides a ligand contact to deamido-NAD(+). Threonine 129 serves as a coordination point for ATP. Glutamate 134 provides a ligand contact to Mg(2+). Deamido-NAD(+) is bound by residues lysine 142 and aspartate 149. 2 residues coordinate ATP: lysine 158 and serine 180. 240–241 (HK) lines the deamido-NAD(+) pocket.

Belongs to the NAD synthetase family. In terms of assembly, homodimer.

The catalysed reaction is deamido-NAD(+) + NH4(+) + ATP = AMP + diphosphate + NAD(+) + H(+). Its pathway is cofactor biosynthesis; NAD(+) biosynthesis; NAD(+) from deamido-NAD(+) (ammonia route): step 1/1. Functionally, catalyzes the ATP-dependent amidation of deamido-NAD to form NAD. Uses ammonia as a nitrogen source. The polypeptide is NH(3)-dependent NAD(+) synthetase (Pyrococcus horikoshii (strain ATCC 700860 / DSM 12428 / JCM 9974 / NBRC 100139 / OT-3)).